Reading from the N-terminus, the 1104-residue chain is A disintegrin and metalloproteinase with thrombospondin motifs 10 (1104 aa).

An N-terminal signal peptide occupies residues 1–25 (MASACQILRWALALGLGLTFKVTHA). Positions 26–233 (FRSQDELLSS…SERGQLGLKR (208 aa)) are excised as a propeptide. 2 N-linked (GlcNAc...) asparagine glycosylation sites follow: N90 and N222. The 219-residue stretch at 239–457 (RYVETLVVAD…GLGLCLNNRP (219 aa)) folds into the Peptidase M12B domain. 11 disulfide bridges follow: C315–C376, C351–C358, C370–C452, C409–C436, C479–C501, C490–C508, C496–C531, C521–C536, C559–C596, C563–C601, and C574–C586. A Zn(2+)-binding site is contributed by H392. E393 is an active-site residue. Residues H396 and H402 each contribute to the Zn(2+) site. The Disintegrin domain maps to 460-546 (QDFVYPTVAP…VPFGSRPEGV (87 aa)). The region spanning 547-602 (DGAWGPWTPWGDCSRSCGGGVSSSSRHCDSPRPTIGGKYCLGERRRHRSCNTNDCP) is the TSP type-1 1 domain. The interval 706–818 (ETIEGVFSPA…PALHYRFNAP (113 aa)) is spacer. N740 and N795 each carry an N-linked (GlcNAc...) asparagine glycan. 4 TSP type-1 domains span residues 825 to 885 (PPYS…EPCP), 888 to 943 (WVVG…QGPM), 944 to 1003 (CPPE…RRCP), and 1004 to 1058 (PARW…AKCD). Disulfide bonds link C837–C879, C841–C884, and C852–C866. N892 is a glycosylation site (N-linked (GlcNAc...) asparagine). Positions 1066–1104 (GPEECKDVNKVAYCPLVLKFQFCSRAYFRQMCCKTCQGR) constitute a PLAC domain.

As to quaternary structure, interacts with FBN1; this interaction promotes microfibrils assembly. Zn(2+) serves as cofactor. Glycosylated. Can be O-fucosylated by POFUT2 on a serine or a threonine residue found within the consensus sequence C1-X(2)-(S/T)-C2-G of the TSP type-1 repeat domains where C1 and C2 are the first and second cysteine residue of the repeat, respectively. Fucosylated repeats can then be further glycosylated by the addition of a beta-1,3-glucose residue by the glucosyltransferase, B3GALTL. Fucosylation mediates the efficient secretion of ADAMTS family members. Can also be C-glycosylated with one or two mannose molecules on tryptophan residues within the consensus sequence W-X-X-W of the TPRs, and N-glycosylated. These other glycosylations can also facilitate secretion. Widely expressed in adult tissues.

It localises to the secreted. It is found in the extracellular space. Its subcellular location is the extracellular matrix. Metalloprotease that participate in microfibrils assembly. Microfibrils are extracellular matrix components occurring independently or along with elastin in the formation of elastic tissues. The sequence is that of A disintegrin and metalloproteinase with thrombospondin motifs 10 (Adamts10) from Mus musculus (Mouse).